An 821-amino-acid chain; its full sequence is Fibroblast growth factor receptor 2 (821 aa).

Positions 1–21 (MVSWGRFICLVVVTMATLSLA) are cleaved as a signal peptide. Over 22-377 (RPSFSLVEDT…EITASPDYLE (356 aa)) the chain is Extracellular. Positions 25–125 (FSLVEDTTLE…ETWYFMVNVT (101 aa)) constitute an Ig-like C2-type 1 domain. A disulfide bridge connects residues Cys62 and Cys107. Residues Asn83 and Asn123 are each glycosylated (N-linked (GlcNAc...) asparagine). Over residues 131-144 (GDDEDDTDGAEDFV) the composition is skewed to acidic residues. The segment at 131-151 (GDDEDDTDGAEDFVSENSNNK) is disordered. 2 Ig-like C2-type domains span residues 154 to 247 (PYWT…YHLD) and 256 to 358 (PILQ…AWLT). Residues 161 to 178 (KMEKRLHAVPAANTVKFR) form a heparin-binding region. An intrachain disulfide couples Cys179 to Cys231. Asn228, Asn241, Asn265, Asn297, Asn318, and Asn331 each carry an N-linked (GlcNAc...) asparagine glycan. Cys278 and Cys342 form a disulfide bridge. Residues 378 to 398 (IAIYCIGVFLIACMVVTVILC) form a helical membrane-spanning segment. Residues 399 to 821 (RMKNTTKKPD…YPHINGSVKT (423 aa)) lie on the Cytoplasmic side of the membrane. The residue at position 466 (Tyr466) is a Phosphotyrosine; by autocatalysis. A Protein kinase domain is found at 481–770 (LTLGKPLGEG…LTLTTNEEYL (290 aa)). ATP contacts are provided by residues 487 to 495 (LGEGCFGQV), Lys517, 565 to 567 (EYA), and Asn571. Residues Tyr586 and Tyr588 each carry the phosphotyrosine; by autocatalysis modification. Asp626 serves as the catalytic Proton acceptor. Tyr656, Tyr657, and Tyr769 each carry phosphotyrosine; by autocatalysis. Ser780 carries the phosphoserine modification.

This sequence belongs to the protein kinase superfamily. Tyr protein kinase family. Fibroblast growth factor receptor subfamily. In terms of assembly, monomer. Homodimer after ligand binding. Interacts predominantly with FGF1 and FGF2, but can also interact with FGF3, FGF4, FGF6, FGF7, FGF8, FGF9, FGF10, FGF17, FGF18 and FGF22 (in vitro). Ligand specificity is determined by tissue-specific expression of isoforms, and differences in the third Ig-like domain are crucial for ligand specificity. Isoform 1 has high affinity for FGF1 and FGF2, but low affinity for FGF7. Isoform 3 has high affinity for FGF1 and FGF7, and has much higher affinity for FGF7 than isoform 1 (in vitro). Affinity for fibroblast growth factors (FGFs) is increased by heparan sulfate glycosaminoglycans that function as coreceptors. Likewise, KLB increases the affinity for FGF19 and FGF21. Interacts with PLCG1, GRB2 and PAK4. Interacts with FLRT2. In terms of processing, autophosphorylated. Binding of FGF family members together with heparan sulfate proteoglycan or heparin promotes receptor dimerization and autophosphorylation on several tyrosine residues. Autophosphorylation occurs in trans between the two FGFR molecules present in the dimer. Phosphorylation at Tyr-769 is essential for interaction with PLCG1. N-glycosylated in the endoplasmic reticulum. The N-glycan chains undergo further maturation to an Endo H-resistant form in the Golgi apparatus. Post-translationally, ubiquitinated. FGFR2 is rapidly ubiquitinated after autophosphorylation, leading to internalization and degradation. Subject to degradation both in lysosomes and by the proteasome.

It localises to the cell membrane. The protein localises to the golgi apparatus. Its subcellular location is the cytoplasmic vesicle. The protein resides in the secreted. It carries out the reaction L-tyrosyl-[protein] + ATP = O-phospho-L-tyrosyl-[protein] + ADP + H(+). Present in an inactive conformation in the absence of bound ligand. Ligand binding leads to dimerization and activation by autophosphorylation on tyrosine residues. Inhibited by ARQ 523 and ARQ 069; these compounds maintain the kinase in an inactive conformation and inhibit autophosphorylation. In terms of biological role, tyrosine-protein kinase that acts as a cell-surface receptor for fibroblast growth factors and plays an essential role in the regulation of cell proliferation, differentiation, migration and apoptosis, and in the regulation of embryonic development. Required for normal embryonic patterning, trophoblast function, limb bud development, lung morphogenesis, osteogenesis and skin development. Plays an essential role in the regulation of osteoblast differentiation, proliferation and apoptosis, and is required for normal skeleton development. Promotes cell proliferation in keratinocytes and immature osteoblasts, but promotes apoptosis in differentiated osteoblasts. Phosphorylates PLCG1, FRS2 and PAK4. Ligand binding leads to the activation of several signaling cascades. Activation of PLCG1 leads to the production of the cellular signaling molecules diacylglycerol and inositol 1,4,5-trisphosphate. Phosphorylation of FRS2 triggers recruitment of GRB2, GAB1, PIK3R1 and SOS1, and mediates activation of RAS, MAPK1/ERK2, MAPK3/ERK1 and the MAP kinase signaling pathway, as well as of the AKT1 signaling pathway. FGFR2 signaling is down-regulated by ubiquitination, internalization and degradation. Mutations that lead to constitutive kinase activation or impair normal FGFR2 maturation, internalization and degradation lead to aberrant signaling. Over-expressed FGFR2 promotes activation of STAT1. The polypeptide is Fibroblast growth factor receptor 2 (FGFR2) (Homo sapiens (Human)).